We begin with the raw amino-acid sequence, 361 residues long: Phosphoserine aminotransferase (361 aa).

R43 provides a ligand contact to L-glutamate. Residues 77–78 (AS), W103, T153, D173, and Q196 each bind pyridoxal 5'-phosphate. K197 is subject to N6-(pyridoxal phosphate)lysine. 238–239 (NT) contacts pyridoxal 5'-phosphate.

It belongs to the class-V pyridoxal-phosphate-dependent aminotransferase family. SerC subfamily. As to quaternary structure, homodimer. Pyridoxal 5'-phosphate is required as a cofactor.

It localises to the cytoplasm. It catalyses the reaction O-phospho-L-serine + 2-oxoglutarate = 3-phosphooxypyruvate + L-glutamate. It carries out the reaction 4-(phosphooxy)-L-threonine + 2-oxoglutarate = (R)-3-hydroxy-2-oxo-4-phosphooxybutanoate + L-glutamate. The protein operates within amino-acid biosynthesis; L-serine biosynthesis; L-serine from 3-phospho-D-glycerate: step 2/3. Its pathway is cofactor biosynthesis; pyridoxine 5'-phosphate biosynthesis; pyridoxine 5'-phosphate from D-erythrose 4-phosphate: step 3/5. Catalyzes the reversible conversion of 3-phosphohydroxypyruvate to phosphoserine and of 3-hydroxy-2-oxo-4-phosphonooxybutanoate to phosphohydroxythreonine. The chain is Phosphoserine aminotransferase from Pseudomonas aeruginosa (strain LESB58).